Here is a 1061-residue protein sequence, read N- to C-terminus: Bifunctional cytochrome P450/NADPH--P450 reductase 1 (1061 aa).

The cytochrome P450 stretch occupies residues 1 to 475 (MKETSPIPQP…AEKAAPDEQK (475 aa)). Heme is bound at residue Cys403. The NADPH--P450 reductase stretch occupies residues 476–1061 (EKTEAKGASV…MYAKDVWAGI (586 aa)). Residues 493–632 (LLVLYGSDTG…QLDEWKKSMW (140 aa)) enclose the Flavodoxin-like domain. Residues 499 to 504 (SDTGTA), 546 to 549 (SYNG), 580 to 582 (CGD), and 588 to 590 (TYQ) contribute to the FMN site. The 234-residue stretch at 671-904 (YEASHASIAE…RTPESRFQLP (234 aa)) folds into the FAD-binding FR-type domain.

The protein in the N-terminal section; belongs to the cytochrome P450 family. It depends on FAD as a cofactor. FMN serves as cofactor. Requires heme b as cofactor.

The protein resides in the cytoplasm. The enzyme catalyses an organic molecule + reduced [NADPH--hemoprotein reductase] + O2 = an alcohol + oxidized [NADPH--hemoprotein reductase] + H2O + H(+). It catalyses the reaction 2 oxidized [cytochrome P450] + NADPH = 2 reduced [cytochrome P450] + NADP(+) + H(+). Functionally, functions as a fatty acid monooxygenase. Catalyzes hydroxylation of a range of long-chain fatty acids, with a preference for long-chain unsaturated and branched-chain fatty acids over saturated fatty acids. Hydroxylation of myristic acid occurs mainly at the omega-2 position. Also displays a NADPH-dependent reductase activity in the C-terminal domain, which allows electron transfer from NADPH to the heme iron of the cytochrome P450 N-terminal domain. Is also able to catalyze efficient oxidation of sodium dodecyl sulfate (SDS). This chain is Bifunctional cytochrome P450/NADPH--P450 reductase 1, found in Bacillus subtilis (strain 168).